A 390-amino-acid polypeptide reads, in one-letter code: LL-diaminopimelate aminotransferase (390 aa).

Tyr13, Gly38, Lys102, Tyr126, and Asn176 together coordinate substrate. Pyridoxal 5'-phosphate is bound by residues 101–102 (SK), Tyr126, Asn176, Tyr207, and 235–237 (SVS). Lys238 bears the N6-(pyridoxal phosphate)lysine mark. Arg246 is a pyridoxal 5'-phosphate binding site. Arg364 provides a ligand contact to substrate.

This sequence belongs to the class-I pyridoxal-phosphate-dependent aminotransferase family. LL-diaminopimelate aminotransferase subfamily. Homodimer. The cofactor is pyridoxal 5'-phosphate.

It catalyses the reaction (2S,6S)-2,6-diaminopimelate + 2-oxoglutarate = (S)-2,3,4,5-tetrahydrodipicolinate + L-glutamate + H2O + H(+). It participates in amino-acid biosynthesis; L-lysine biosynthesis via DAP pathway; LL-2,6-diaminopimelate from (S)-tetrahydrodipicolinate (aminotransferase route): step 1/1. Functionally, involved in the synthesis of meso-diaminopimelate (m-DAP or DL-DAP), required for both lysine and peptidoglycan biosynthesis. Catalyzes the direct conversion of tetrahydrodipicolinate to LL-diaminopimelate. Is also able to catalyze the reverse reaction in vitro, i.e. the transamination of LL-diaminopimelate with 2-oxoglutarate to produce tetrahydrodipicolinate and glutamate. Can also use m-DAP instead of LL-DAP as the amino-group donor, and oxaloacetate instead of 2-oxoglutarate as the amino-group acceptor. The chain is LL-diaminopimelate aminotransferase from Moorella thermoacetica (strain ATCC 39073 / JCM 9320).